Here is a 329-residue protein sequence, read N- to C-terminus: MSSAYCSSAVAVSAAATASSAATFNPLLSSHSNSQLFYRFTPKSFKLVANCPNPLILHSNIRRHRFFCAAETEASSADDEIQASVEEEEEVEEEGDEGEEEVEEEKQTTQASGEEGRLYVGNLPYTITSSELSQIFGEAGTVVDVQIVYDKVTDRSRGFGFVTMGSIEEAKEAMQMFNSSQIGGRTVKVNFPEVPRGGENEVMRTKIRDNNRSYVDSPHKVYAGNLGWNLTSQGLKDAFGDQPGVLGAKVIYERNTGRSRGFGFISFESAENVQSALATMNGVEVEGRALRLNLASEREKPTVSPPSVEEGETEEASLESNEVLSNVSA.

The transit peptide at 1 to 69 (MSSAYCSSAV…NIRRHRFFCA (69 aa)) directs the protein to the chloroplast. Residues 77–104 (ADDEIQASVEEEEEVEEEGDEGEEEVEE) show a composition bias toward acidic residues. Disordered stretches follow at residues 77–117 (ADDE…EEGR) and 296–329 (SEREKPTVSPPSVEEGETEEASLESNEVLSNVSA). RRM domains are found at residues 116 to 194 (GRLY…FPEV) and 219 to 297 (HKVY…LASE).

It localises to the plastid. It is found in the chloroplast. In terms of biological role, could be involved in splicing and/or processing of chloroplast RNAs. The polypeptide is RNA-binding protein CP33, chloroplastic (Arabidopsis thaliana (Mouse-ear cress)).